The chain runs to 463 residues: ATP synthase subunit beta 1 (463 aa).

G152–T159 lines the ATP pocket.

Belongs to the ATPase alpha/beta chains family. As to quaternary structure, F-type ATPases have 2 components, CF(1) - the catalytic core - and CF(0) - the membrane proton channel. CF(1) has five subunits: alpha(3), beta(3), gamma(1), delta(1), epsilon(1). CF(0) has three main subunits: a(1), b(2) and c(9-12). The alpha and beta chains form an alternating ring which encloses part of the gamma chain. CF(1) is attached to CF(0) by a central stalk formed by the gamma and epsilon chains, while a peripheral stalk is formed by the delta and b chains.

The protein localises to the cell inner membrane. The catalysed reaction is ATP + H2O + 4 H(+)(in) = ADP + phosphate + 5 H(+)(out). Its function is as follows. Produces ATP from ADP in the presence of a proton gradient across the membrane. The catalytic sites are hosted primarily by the beta subunits. This is ATP synthase subunit beta 1 from Shewanella frigidimarina (strain NCIMB 400).